A 1258-amino-acid polypeptide reads, in one-letter code: Cohesin subunit SA-1 (1258 aa).

Positions 1 to 59 (MITSELPVLQDSTNETTAHSDAGSELEETEVKGKRKRGRPGRPPSTNKKPRKSPGEKSR) are disordered. The segment covering 10-19 (QDSTNETTAH) has biased composition (polar residues). Ser-24 is subject to Phosphoserine. Residues 296–381 (FVHRYRDAIA…NRFKDRIVSM (86 aa)) form the SCD domain. Residues Ser-756, Ser-1062, and Ser-1065 each carry the phosphoserine modification. A disordered region spans residues 1055–1148 (GGEDDRMSVN…EHGSEPDFLH (94 aa)). The segment covering 1062–1075 (SVNSGSSSSKTSSV) has biased composition (low complexity). The span at 1076-1087 (RSKKGRPPLHRK) shows a compositional bias: basic residues. Ser-1093 is subject to Phosphoserine. Polar residues predominate over residues 1095 to 1106 (DNTWLNRTDTMI). Positions 1137–1146 (ESEHGSEPDF) are enriched in basic and acidic residues. Lys-1161 participates in a covalent cross-link: Glycyl lysine isopeptide (Lys-Gly) (interchain with G-Cter in SUMO2).

The protein belongs to the SCC3 family. Cohesin complexes are composed of a heterodimer between a SMC1 protein (SMC1A or SMC1B) and SMC3, which are attached via their hinge domain, and RAD21 which link them at their heads, and one STAG protein (STAG1, STAG2 or STAG3). In cohesin complexes, STAG1 is mutually exclusive with STAG2 and STAG3. Interacts directly with RAD21 in cohesin complex. The cohesin complex interacts with the cohesin loading complex subunits NIPBL/Scc2 (via HEAT repeats) and MAU2/Scc4. NIPBL directly contacts all members of the complex, RAD21, SMC1A/B, SMC3 and STAG1. Phosphorylated by PLK1. The large dissociation of cohesin from chromosome arms during prophase is partly due to its phosphorylation.

It is found in the nucleus. The protein localises to the chromosome. Functionally, component of cohesin complex, a complex required for the cohesion of sister chromatids after DNA replication. The cohesin complex apparently forms a large proteinaceous ring within which sister chromatids can be trapped. At anaphase, the complex is cleaved and dissociates from chromatin, allowing sister chromatids to segregate. The cohesin complex may also play a role in spindle pole assembly during mitosis. The sequence is that of Cohesin subunit SA-1 (Stag1) from Mus musculus (Mouse).